A 245-amino-acid chain; its full sequence is MTRMKYLVAAATLSLFLAGCSGSKEEVPDNPPNEIYATAQQKLQDGNWRQAITQLEALDNRYPFGPYSQQVQLDLIYAYYKNADLPLAQAAIDRFIRLNPTHPNIDYVMYMRGLTNMALDDSALQGFFGVDRSDRDPQHARAAFSDFSKLVRGYPNSQYTTDATKRLVFLKDRLAKYEYSVAEYYTERGAWVAVVNRVEGMLRDYPDTQATRDALPLMENAYRQMQMNAQAEKVAKIIAANSSNT.

The first 19 residues, 1 to 19 (MTRMKYLVAAATLSLFLAG), serve as a signal peptide directing secretion. C20 carries N-palmitoyl cysteine lipidation. A lipid anchor (S-diacylglycerol cysteine) is attached at C20.

This sequence belongs to the BamD family. As to quaternary structure, part of the Bam complex, which is composed of the outer membrane protein BamA, and four lipoproteins BamB, BamC, BamD and BamE.

Its subcellular location is the cell outer membrane. In terms of biological role, part of the outer membrane protein assembly complex, which is involved in assembly and insertion of beta-barrel proteins into the outer membrane. Constitutes, with BamA, the core component of the assembly machinery. This is Outer membrane protein assembly factor BamD from Escherichia coli O157:H7.